We begin with the raw amino-acid sequence, 364 residues long: Phosphate acyltransferase (364 aa).

The tract at residues 343-364 (IRTSGRSGGKSKSSAAREDGAA) is disordered.

The protein belongs to the PlsX family. As to quaternary structure, homodimer. Probably interacts with PlsY.

It localises to the cytoplasm. The enzyme catalyses a fatty acyl-[ACP] + phosphate = an acyl phosphate + holo-[ACP]. Its pathway is lipid metabolism; phospholipid metabolism. Functionally, catalyzes the reversible formation of acyl-phosphate (acyl-PO(4)) from acyl-[acyl-carrier-protein] (acyl-ACP). This enzyme utilizes acyl-ACP as fatty acyl donor, but not acyl-CoA. This Novosphingobium aromaticivorans (strain ATCC 700278 / DSM 12444 / CCUG 56034 / CIP 105152 / NBRC 16084 / F199) protein is Phosphate acyltransferase.